The sequence spans 134 residues: Small ribosomal subunit protein uS9 (134 aa).

It belongs to the universal ribosomal protein uS9 family.

This Pseudothermotoga lettingae (strain ATCC BAA-301 / DSM 14385 / NBRC 107922 / TMO) (Thermotoga lettingae) protein is Small ribosomal subunit protein uS9.